The following is a 95-amino-acid chain: MANHPSAKKMIKVIKKRTMVNRMRKSRAHNYVKKFMAALAAGNKELMIETFKKAESNLHKCVNKKIIHRNTAARKISRMALKLKAFDLQQQAKAV.

The protein belongs to the bacterial ribosomal protein bS20 family.

Functionally, binds directly to 16S ribosomal RNA. The protein is Small ribosomal subunit protein bS20 of Ehrlichia chaffeensis (strain ATCC CRL-10679 / Arkansas).